We begin with the raw amino-acid sequence, 726 residues long: Catalase-peroxidase (726 aa).

Residues 98–226 (WHSAGTYRMQ…LAAVHMGLIY (129 aa)) constitute a cross-link (tryptophyl-tyrosyl-methioninium (Trp-Tyr) (with M-252)). The active-site Proton acceptor is H99. Residues 226-252 (YVNPEGVNGQPDPARTAQHVRETFARM) constitute a cross-link (tryptophyl-tyrosyl-methioninium (Tyr-Met) (with W-98)). Position 267 (H267) interacts with heme b.

This sequence belongs to the peroxidase family. Peroxidase/catalase subfamily. As to quaternary structure, homodimer or homotetramer. The cofactor is heme b. In terms of processing, formation of the three residue Trp-Tyr-Met cross-link is important for the catalase, but not the peroxidase activity of the enzyme.

It catalyses the reaction H2O2 + AH2 = A + 2 H2O. The enzyme catalyses 2 H2O2 = O2 + 2 H2O. Functionally, bifunctional enzyme with both catalase and broad-spectrum peroxidase activity. This Roseobacter denitrificans (strain ATCC 33942 / OCh 114) (Erythrobacter sp. (strain OCh 114)) protein is Catalase-peroxidase.